A 240-amino-acid chain; its full sequence is uncharacterized protein (240 aa).

To H.influenzae HI_0575.

This is an uncharacterized protein from Escherichia coli (strain K12).